We begin with the raw amino-acid sequence, 203 residues long: Ras-like protein 1 (203 aa).

17–24 serves as a coordination point for GTP; it reads GGGGVGKS. The Effector region signature appears at 39-47; it reads YDPTIEDSY. GTP contacts are provided by residues 64–68 and 123–126; these read DTAGQ and NKCD. Cys200 carries the post-translational modification Cysteine methyl ester. A lipid anchor (S-farnesyl cysteine) is attached at Cys200. Residues 201–203 constitute a propeptide, removed in mature form; that stretch reads ILM.

This sequence belongs to the small GTPase superfamily. Ras family.

The protein localises to the cell membrane. It carries out the reaction GTP + H2O = GDP + phosphate + H(+). Alternates between an inactive form bound to GDP and an active form bound to GTP. Activated by a guanine nucleotide-exchange factor (GEF) and inactivated by a GTPase-activating protein (GAP). The chain is Ras-like protein 1 (RAS1) from Mucor circinelloides f. lusitanicus (Mucor racemosus var. lusitanicus).